A 497-amino-acid chain; its full sequence is Acetyl-coenzyme A carboxylase carboxyl transferase subunit beta, chloroplastic (497 aa).

In terms of domain architecture, CoA carboxyltransferase N-terminal spans 230–497 (LWVQCENCYG…FFPVNSNSIK (268 aa)). Positions 234, 237, 253, and 256 each coordinate Zn(2+). Residues 234–256 (CENCYGLNYKKFFRSKFNICEQC) form a C4-type zinc finger.

This sequence belongs to the AccD/PCCB family. In terms of assembly, acetyl-CoA carboxylase is a heterohexamer composed of biotin carboxyl carrier protein, biotin carboxylase and 2 subunits each of ACCase subunit alpha and ACCase plastid-coded subunit beta (accD). It depends on Zn(2+) as a cofactor.

It is found in the plastid. The protein resides in the chloroplast stroma. It catalyses the reaction N(6)-carboxybiotinyl-L-lysyl-[protein] + acetyl-CoA = N(6)-biotinyl-L-lysyl-[protein] + malonyl-CoA. Its pathway is lipid metabolism; malonyl-CoA biosynthesis; malonyl-CoA from acetyl-CoA: step 1/1. In terms of biological role, component of the acetyl coenzyme A carboxylase (ACC) complex. Biotin carboxylase (BC) catalyzes the carboxylation of biotin on its carrier protein (BCCP) and then the CO(2) group is transferred by the transcarboxylase to acetyl-CoA to form malonyl-CoA. The sequence is that of Acetyl-coenzyme A carboxylase carboxyl transferase subunit beta, chloroplastic from Nandina domestica (Heavenly bamboo).